The sequence spans 730 residues: Protein folded gastrulation (730 aa).

A signal peptide spans 1–21 (MSPPNCLLAVLALTVFIGANN). N51 and N193 each carry an N-linked (GlcNAc...) asparagine glycan. Over residues 197-211 (TPETSTSITPTSTTT) the composition is skewed to low complexity. Positions 197–222 (TPETSTSITPTSTTTFAVPSVPSGEA) are disordered. N252 and N289 each carry an N-linked (GlcNAc...) asparagine glycan. The span at 361-385 (ELEEEVGEEEVTATDILPSEEDEYT) shows a compositional bias: acidic residues. A disordered region spans residues 361–424 (ELEEEVGEEE…SPHPPEEPEI (64 aa)). A compositionally biased stretch (low complexity) spans 386–415 (TETATTTGDTTVAEASMDTSTATSTSGQSS). N459 carries an N-linked (GlcNAc...) asparagine glycan. 2 disordered regions span residues 474-526 (EDES…GGHK) and 545-583 (KGKQ…TTTT). Residues 478–491 (STTTATPEPSSSTP) show a composition bias toward low complexity. Over residues 504–513 (DNDNLMTNTI) the composition is skewed to polar residues. Residues 567 to 583 (TSALTSTSTEDATTTTT) show a composition bias toward low complexity. N590 and N639 each carry an N-linked (GlcNAc...) asparagine glycan. Residues 663–676 (SAASTESAGTAATT) are compositionally biased toward low complexity. Positions 663 to 683 (SAASTESAGTAATTPNSSSNP) are disordered. An N-linked (GlcNAc...) asparagine glycan is attached at N678.

Post-translationally, may be highly O-glycosylated in its Ser/Thr-rich C-terminal part. Expressed in the invagination primordia in a pattern that precisely precedes the pattern of constrictions.

It is found in the secreted. The protein resides in the extracellular space. It localises to the extracellular matrix. Coordinates cell shape changes during formation of the ventral furrow and invagination of the posterior midgut primordium, by inducing apical constriction of cells in spatially and temporally defined manners. Could function as a secreted signal to initiate apical constriction by acting as a ligand for an unidentified G protein-coupled receptor, which in turn activates the G protein alpha subunit encoded by concertina, in neighboring cells. Such an intracellular pathway would ultimately induce contraction of the apical actin-myosin network. In the ventral furrow, fog appears to ensure that all the cells initiate constriction within several minutes of each other. In the posterior midgut invagination, fog appears to direct the ordered progression of constriction initiations out from a central region and also to delimit the peripheral extent of this spreading. This chain is Protein folded gastrulation (fog), found in Drosophila melanogaster (Fruit fly).